The following is a 676-amino-acid chain: UvrABC system protein B (676 aa).

A Helicase ATP-binding domain is found at 26–414 (EGLDAGLAHQ…SAGEIADQVV (389 aa)). An ATP-binding site is contributed by 39–46 (GVTGSGKT). The Beta-hairpin signature appears at 92–115 (YYDYYQPEAYVPTTDTFIEKDASV). In terms of domain architecture, Helicase C-terminal spans 432–598 (QVDDLLSEIR…ALKRNIKDIM (167 aa)). The 36-residue stretch at 636-671 (EKEISRLEAAMYQHAQDLEFELAAEKRDEIEKLRAQ) folds into the UVR domain.

Belongs to the UvrB family. In terms of assembly, forms a heterotetramer with UvrA during the search for lesions. Interacts with UvrC in an incision complex.

The protein resides in the cytoplasm. Its function is as follows. The UvrABC repair system catalyzes the recognition and processing of DNA lesions. A damage recognition complex composed of 2 UvrA and 2 UvrB subunits scans DNA for abnormalities. Upon binding of the UvrA(2)B(2) complex to a putative damaged site, the DNA wraps around one UvrB monomer. DNA wrap is dependent on ATP binding by UvrB and probably causes local melting of the DNA helix, facilitating insertion of UvrB beta-hairpin between the DNA strands. Then UvrB probes one DNA strand for the presence of a lesion. If a lesion is found the UvrA subunits dissociate and the UvrB-DNA preincision complex is formed. This complex is subsequently bound by UvrC and the second UvrB is released. If no lesion is found, the DNA wraps around the other UvrB subunit that will check the other stand for damage. This Vibrio parahaemolyticus serotype O3:K6 (strain RIMD 2210633) protein is UvrABC system protein B.